The sequence spans 1173 residues: BRCA2-interacting transcriptional repressor EMSY (1173 aa).

The region spanning C16–V100 is the ENT domain. Positions S149–S177 are enriched in low complexity. Disordered regions lie at residues S149 to V179, K191 to V216, N676 to P720, S797 to A816, R905 to V998, P1020 to S1046, and D1139 to Q1173. Over residues T683–A693 the composition is skewed to low complexity. 2 stretches are compositionally biased toward low complexity: residues S911–S921 and S937–T953. Composition is skewed to polar residues over residues Q961–S976 and S989–V998. The span at S1025 to S1040 shows a compositional bias: low complexity. Residues E1148–N1159 show a composition bias toward acidic residues.

As to quaternary structure, homodimer.

It is found in the nucleus. Functionally, regulator which is able to repress transcription, possibly via its interaction with a multiprotein chromatin remodeling complex that modifies the chromatin. This Danio rerio (Zebrafish) protein is BRCA2-interacting transcriptional repressor EMSY.